A 66-amino-acid chain; its full sequence is Potassium channel toxin alpha-KTx 30.1 (66 aa).

The first 24 residues, 1 to 24, serve as a signal peptide directing secretion; the sequence is MNTGFFFFVIMATGLVLTFDTIHA. 3 disulfide bridges follow: cysteine 30–cysteine 50, cysteine 36–cysteine 55, and cysteine 40–cysteine 57.

Belongs to the short scorpion toxin superfamily. Potassium channel inhibitor family. Alpha-KTx 30 subfamily. As to expression, expressed by the venom gland.

Its subcellular location is the secreted. Inhibits Kv1.3/KCNA3 channel (1 uM of the toxin inhibits currents by 64.1%). The sequence is that of Potassium channel toxin alpha-KTx 30.1 from Scorpiops margerisonae (Scorpion).